The primary structure comprises 1140 residues: Chromosome partition protein Smc (1140 aa).

Position 34 to 41 (34 to 41) interacts with ATP; sequence PNGSGKSN. Residues 160-484 adopt a coiled-coil conformation; the sequence is VDQFDSEIER…EKEASAKIAS (325 aa). The region spanning 502–619 is the SMC hinge domain; sequence EGVIGLVRDL…VQDIDAGRRL (118 aa). Residues 660–990 are a coiled coil; that stretch reads LEGMKIQLSS…MLNEKKREVF (331 aa).

This sequence belongs to the SMC family. Homodimer.

The protein resides in the cytoplasm. Functionally, required for chromosome condensation and partitioning. The sequence is that of Chromosome partition protein Smc from Thermoplasma acidophilum (strain ATCC 25905 / DSM 1728 / JCM 9062 / NBRC 15155 / AMRC-C165).